Reading from the N-terminus, the 220-residue chain is Translation initiation factor 6 (220 aa).

Belongs to the eIF-6 family.

In terms of biological role, binds to the 50S ribosomal subunit and prevents its association with the 30S ribosomal subunit to form the 70S initiation complex. This Pyrobaculum arsenaticum (strain DSM 13514 / JCM 11321 / PZ6) protein is Translation initiation factor 6.